The chain runs to 199 residues: Recombination protein RecR (199 aa).

Residues 58–73 (CLVCGNVTGSDICPIC) form a C4-type zinc finger. Positions 81–176 (GEICVVTDVA…AVTGLAQGVP (96 aa)) constitute a Toprim domain.

This sequence belongs to the RecR family.

Its function is as follows. May play a role in DNA repair. It seems to be involved in an RecBC-independent recombinational process of DNA repair. It may act with RecF and RecO. The chain is Recombination protein RecR from Paracoccus denitrificans (strain Pd 1222).